The primary structure comprises 249 residues: ATP synthase subunit a (249 aa).

5 consecutive transmembrane segments (helical) span residues 35 to 55 (ILLTSWFVIALILLAAFISSL), 92 to 112 (VPFIGTLFLFIFVSNWSGALV), 131 to 151 (INTTVALALLTSIAYFYAGIS), 187 to 209 (LFGNILADELVVGVLVLLVPLFI), and 221 to 241 (SAIQALIFATLAANYIGEALE).

This sequence belongs to the ATPase A chain family. F-type ATPases have 2 components, CF(1) - the catalytic core - and CF(0) - the membrane proton channel. CF(1) has five subunits: alpha(3), beta(3), gamma(1), delta(1), epsilon(1). CF(0) has four main subunits: a, b, b' and c.

It localises to the cellular thylakoid membrane. Functionally, key component of the proton channel; it plays a direct role in the translocation of protons across the membrane. This Trichodesmium erythraeum (strain IMS101) protein is ATP synthase subunit a.